Here is a 142-residue protein sequence, read N- to C-terminus: Hemoglobin subunit alpha (142 aa).

Position 1 is an N-acetylserine (serine 1). Positions 1-142 (SLSEKNKAAV…VALALADRYR (142 aa)) constitute a Globin domain. O2 is bound at residue histidine 59. Position 88 (histidine 88) interacts with heme b.

It belongs to the globin family. As to quaternary structure, heterotetramer of two alpha chains and two beta chains. Red blood cells.

In terms of biological role, involved in oxygen transport from gills to the various peripheral tissues. In Pagothenia borchgrevinki (Bald rockcod), this protein is Hemoglobin subunit alpha (hba).